A 332-amino-acid polypeptide reads, in one-letter code: Eukaryotic translation initiation factor 3 subunit I (332 aa).

WD repeat units lie at residues 8–47 (GHER…GTYH), 48–87 (GHQG…LLHT), 144–182 (DESK…LLSS), and 279–318 (GHFG…FDFM).

The protein belongs to the eIF-3 subunit I family. In terms of assembly, component of the eukaryotic translation initiation factor 3 (eIF-3) complex.

The protein resides in the cytoplasm. In terms of biological role, component of the eukaryotic translation initiation factor 3 (eIF-3) complex, which is involved in protein synthesis of a specialized repertoire of mRNAs and, together with other initiation factors, stimulates binding of mRNA and methionyl-tRNAi to the 40S ribosome. The eIF-3 complex specifically targets and initiates translation of a subset of mRNAs involved in cell proliferation. The polypeptide is Eukaryotic translation initiation factor 3 subunit I (Phaeosphaeria nodorum (strain SN15 / ATCC MYA-4574 / FGSC 10173) (Glume blotch fungus)).